The chain runs to 293 residues: Elongation factor Ts (293 aa).

Positions 79–82 (TDFV) are involved in Mg(2+) ion dislocation from EF-Tu.

It belongs to the EF-Ts family.

It is found in the cytoplasm. Functionally, associates with the EF-Tu.GDP complex and induces the exchange of GDP to GTP. It remains bound to the aminoacyl-tRNA.EF-Tu.GTP complex up to the GTP hydrolysis stage on the ribosome. This is Elongation factor Ts from Macrococcus caseolyticus (strain JCSC5402) (Macrococcoides caseolyticum).